A 99-amino-acid chain; its full sequence is Integration host factor subunit alpha (99 aa).

A disordered region spans residues 51 to 71; that stretch reads NFDLRDKNQRPGRNPKTGEDI.

Belongs to the bacterial histone-like protein family. As to quaternary structure, heterodimer of an alpha and a beta chain.

In terms of biological role, this protein is one of the two subunits of integration host factor, a specific DNA-binding protein that functions in genetic recombination as well as in transcriptional and translational control. This is Integration host factor subunit alpha (ihfA) from Dickeya dadantii (strain 3937) (Erwinia chrysanthemi (strain 3937)).